The sequence spans 91 residues: uncharacterized protein (91 aa).

It belongs to the FrmR/RcnR family.

The protein resides in the cytoplasm. This is an uncharacterized protein from Serratia marcescens.